The sequence spans 284 residues: Nucleotide-binding protein Sputcn32_0712 (284 aa).

An ATP-binding site is contributed by 8-15 (GRSGSGKS). 56-59 (DVRN) is a GTP binding site.

This sequence belongs to the RapZ-like family.

Its function is as follows. Displays ATPase and GTPase activities. The protein is Nucleotide-binding protein Sputcn32_0712 of Shewanella putrefaciens (strain CN-32 / ATCC BAA-453).